Here is a 562-residue protein sequence, read N- to C-terminus: 2-succinyl-5-enolpyruvyl-6-hydroxy-3-cyclohexene-1-carboxylate synthase (562 aa).

This sequence belongs to the TPP enzyme family. MenD subfamily. As to quaternary structure, homodimer. Requires Mg(2+) as cofactor. The cofactor is Mn(2+). Thiamine diphosphate is required as a cofactor.

It catalyses the reaction isochorismate + 2-oxoglutarate + H(+) = 5-enolpyruvoyl-6-hydroxy-2-succinyl-cyclohex-3-ene-1-carboxylate + CO2. The protein operates within quinol/quinone metabolism; 1,4-dihydroxy-2-naphthoate biosynthesis; 1,4-dihydroxy-2-naphthoate from chorismate: step 2/7. It functions in the pathway cofactor biosynthesis; phylloquinone biosynthesis. Functionally, catalyzes the thiamine diphosphate-dependent decarboxylation of 2-oxoglutarate and the subsequent addition of the resulting succinic semialdehyde-thiamine pyrophosphate anion to isochorismate to yield 2-succinyl-5-enolpyruvyl-6-hydroxy-3-cyclohexene-1-carboxylate (SEPHCHC). In Thermosynechococcus vestitus (strain NIES-2133 / IAM M-273 / BP-1), this protein is 2-succinyl-5-enolpyruvyl-6-hydroxy-3-cyclohexene-1-carboxylate synthase.